Consider the following 766-residue polypeptide: FYVE, RhoGEF and PH domain-containing protein 4 (766 aa).

Residues 1-150 (MEESNPAPTS…SSVTNSHDEN (150 aa)) are actin filament-binding. Composition is skewed to polar residues over residues 43-65 (STMN…TPQK), 132-145 (RNET…SVTN), and 152-161 (CDSSCRTQGT). The interval 43 to 167 (STMNLNIPQT…TQGTDLGLPS (125 aa)) is disordered. The 188-residue stretch at 206–393 (KLHKIATELL…STAASHSNSA (188 aa)) folds into the DH domain. Residues 422–521 (ELIKEGQILK…WIKALQESID (100 aa)) enclose the PH 1 domain. The segment at 559–619 (DNEVTMCMKC…VCKDCYQIMS (61 aa)) adopts an FYVE-type zinc-finger fold. Zn(2+) is bound by residues Cys-565, Cys-568, Cys-582, Cys-585, Cys-590, Cys-593, Cys-611, and Cys-614. The PH 2 domain occupies 643–740 (NSEVCSFLQY…WLKIILLAVT (98 aa)). Phosphoserine occurs at positions 702 and 716. The disordered stretch occupies residues 745 to 766 (DGPSEHLDTLDNLPGPKEKSEC).

In terms of assembly, homooligomer. Detected in brain, lung, liver, skeletal muscle, kidney, testis and cultured hippocampal neurons.

Its subcellular location is the cytoplasm. The protein resides in the cytoskeleton. The protein localises to the cell projection. It is found in the filopodium. In terms of biological role, activates CDC42, a member of the Ras-like family of Rho- and Rac proteins, by exchanging bound GDP for free GTP. Plays a role in regulating the actin cytoskeleton and cell shape. Activates MAPK8. This chain is FYVE, RhoGEF and PH domain-containing protein 4 (Fgd4), found in Rattus norvegicus (Rat).